The sequence spans 376 residues: Alanine racemase (376 aa).

K40 acts as the Proton acceptor; specific for D-alanine in catalysis. The residue at position 40 (K40) is an N6-(pyridoxal phosphate)lysine. R138 provides a ligand contact to substrate. Y270 serves as the catalytic Proton acceptor; specific for L-alanine. M317 provides a ligand contact to substrate.

Belongs to the alanine racemase family. Pyridoxal 5'-phosphate is required as a cofactor.

The catalysed reaction is L-alanine = D-alanine. The protein operates within amino-acid biosynthesis; D-alanine biosynthesis; D-alanine from L-alanine: step 1/1. Its function is as follows. Catalyzes the interconversion of L-alanine and D-alanine. May also act on other amino acids. The protein is Alanine racemase (alr) of Lactobacillus delbrueckii subsp. bulgaricus (strain ATCC BAA-365 / Lb-18).